The following is a 198-amino-acid chain: NAD(P)H dehydrogenase (quinone) (198 aa).

The 186-residue stretch at Ile-4 to Val-189 folds into the Flavodoxin-like domain. FMN-binding positions include Ser-10–Ile-15 and Thr-78–Phe-80. An NAD(+)-binding site is contributed by Tyr-12. A substrate-binding site is contributed by Trp-98. Residues Ser-113–Gly-118 and His-133 each bind FMN.

The protein belongs to the WrbA family. The cofactor is FMN.

The enzyme catalyses a quinone + NADH + H(+) = a quinol + NAD(+). It carries out the reaction a quinone + NADPH + H(+) = a quinol + NADP(+). This is NAD(P)H dehydrogenase (quinone) from Salmonella paratyphi B (strain ATCC BAA-1250 / SPB7).